Consider the following 365-residue polypeptide: Aspartate-semialdehyde dehydrogenase (365 aa).

Threonine 15, glycine 16, threonine 17, valine 18, serine 40, serine 43, leucine 89, and aspartate 90 together coordinate NADP(+). Cysteine 156 (acyl-thioester intermediate) is an active-site residue. Residue glycine 188 coordinates NADP(+). Histidine 255 serves as the catalytic Proton acceptor. Position 342 (asparagine 342) interacts with NADP(+).

This sequence belongs to the aspartate-semialdehyde dehydrogenase family. In terms of assembly, homotetramer; dimer of dimers.

Its subcellular location is the cytoplasm. It is found in the cytosol. It localises to the nucleus. The enzyme catalyses L-aspartate 4-semialdehyde + phosphate + NADP(+) = 4-phospho-L-aspartate + NADPH + H(+). Its pathway is amino-acid biosynthesis; L-methionine biosynthesis via de novo pathway; L-homoserine from L-aspartate: step 2/3. The protein operates within amino-acid biosynthesis; L-threonine biosynthesis; L-threonine from L-aspartate: step 2/5. Its activity is regulated as follows. Inhibited by the competitive inhibitor 1,4-benzoquinone and derivates such as 2-chloro-3-methoxy-1,4-naphthoquinone, 2,3-dichloro-1,4-naphthoquinone, 2-chloro-1,4-naphthoquinone, 2-bromo-1,4-naphthoquinone and 2,3-dichloro-5,8-dihydroxy-1,4-naphthoquinone. Catalyzes the NADPH-dependent formation of L-aspartate 4-semialdehyde (L-ASA) by the reductive dephosphorylation of 4-phospho-L-aspartate. Mediates the second step in the biosynthesis of amino acids that derive from aspartate (the aspartate family of amino acids), including methioinine and threonine, the latter of which is a precursor to isoleucine. The sequence is that of Aspartate-semialdehyde dehydrogenase from Cryptococcus neoformans var. neoformans serotype D (strain JEC21 / ATCC MYA-565) (Filobasidiella neoformans).